The following is a 157-amino-acid chain: MKVRTFEGDYRGEGLRIAVVVSRFNDLLTEELLKGALDCFKRHGVEEVHIFRVPGSFEIPITVKKIAKRGYDAILALGVLIKGETRHFELVASQVSRGIAQVSLEEGIPVIFGIVPAEDEIQAISRSGIKSNRGFEYALTTIEMANLFRKLGENNER.

5-amino-6-(D-ribitylamino)uracil contacts are provided by residues Phe24, 56–58 (SFE), and 79–81 (VLI). 84-85 (ET) is a (2S)-2-hydroxy-3-oxobutyl phosphate binding site. The Proton donor role is filled by His87. Phe112 is a 5-amino-6-(D-ribitylamino)uracil binding site. Arg126 contacts (2S)-2-hydroxy-3-oxobutyl phosphate.

It belongs to the DMRL synthase family.

The catalysed reaction is (2S)-2-hydroxy-3-oxobutyl phosphate + 5-amino-6-(D-ribitylamino)uracil = 6,7-dimethyl-8-(1-D-ribityl)lumazine + phosphate + 2 H2O + H(+). It participates in cofactor biosynthesis; riboflavin biosynthesis; riboflavin from 2-hydroxy-3-oxobutyl phosphate and 5-amino-6-(D-ribitylamino)uracil: step 1/2. Functionally, catalyzes the formation of 6,7-dimethyl-8-ribityllumazine by condensation of 5-amino-6-(D-ribitylamino)uracil with 3,4-dihydroxy-2-butanone 4-phosphate. This is the penultimate step in the biosynthesis of riboflavin. The sequence is that of 6,7-dimethyl-8-ribityllumazine synthase from Pyrococcus furiosus (strain ATCC 43587 / DSM 3638 / JCM 8422 / Vc1).